We begin with the raw amino-acid sequence, 227 residues long: uncharacterized protein (227 aa).

This is an uncharacterized protein from Haemophilus influenzae (Bacteriophage HP1).